Consider the following 152-residue polypeptide: Protein-export protein SecB (152 aa).

Belongs to the SecB family. Homotetramer, a dimer of dimers. One homotetramer interacts with 1 SecA dimer.

Its subcellular location is the cytoplasm. Functionally, one of the proteins required for the normal export of preproteins out of the cell cytoplasm. It is a molecular chaperone that binds to a subset of precursor proteins, maintaining them in a translocation-competent state. It also specifically binds to its receptor SecA. This is Protein-export protein SecB from Rickettsia peacockii (strain Rustic).